The sequence spans 277 residues: Large ribosomal subunit protein mL46 (277 aa).

Position 217 is an N6-succinyllysine (K217). Residue K228 is modified to N6-acetyllysine. At K246 the chain carries N6-succinyllysine.

This sequence belongs to the mitochondrion-specific ribosomal protein mL46 family. Component of the mitochondrial ribosome large subunit (39S) which comprises a 16S rRNA and about 50 distinct proteins.

The protein resides in the mitochondrion. The sequence is that of Large ribosomal subunit protein mL46 (Mrpl46) from Rattus norvegicus (Rat).